The chain runs to 672 residues: DNA ligase (672 aa).

Residues 34–38 (DSVYD), 83–84 (SL), and glutamate 113 each bind NAD(+). Catalysis depends on lysine 115, which acts as the N6-AMP-lysine intermediate. Residues arginine 136, glutamate 170, lysine 286, and lysine 310 each coordinate NAD(+). Residues cysteine 404, cysteine 407, cysteine 422, and cysteine 427 each contribute to the Zn(2+) site. The BRCT domain occupies 592–672 (STDSSFNGLR…EFIQQMEEES (81 aa)).

Belongs to the NAD-dependent DNA ligase family. LigA subfamily. Mg(2+) serves as cofactor. Mn(2+) is required as a cofactor.

It carries out the reaction NAD(+) + (deoxyribonucleotide)n-3'-hydroxyl + 5'-phospho-(deoxyribonucleotide)m = (deoxyribonucleotide)n+m + AMP + beta-nicotinamide D-nucleotide.. Its function is as follows. DNA ligase that catalyzes the formation of phosphodiester linkages between 5'-phosphoryl and 3'-hydroxyl groups in double-stranded DNA using NAD as a coenzyme and as the energy source for the reaction. It is essential for DNA replication and repair of damaged DNA. The sequence is that of DNA ligase from Ligilactobacillus salivarius (strain UCC118) (Lactobacillus salivarius).